A 222-amino-acid polypeptide reads, in one-letter code: Hexitol phosphatase B (222 aa).

Asp13 (nucleophile) is an active-site residue. A divalent metal cation-binding residues include Asp13 and Asp15. Substrate is bound by residues 13-15 (DMD), 115-116 (SA), and Lys148. Catalysis depends on Asp15, which acts as the Proton donor. An a divalent metal cation-binding site is contributed by Asp173.

This sequence belongs to the HAD-like hydrolase superfamily. CbbY/CbbZ/Gph/YieH family. Mg(2+) is required as a cofactor. It depends on Mn(2+) as a cofactor. The cofactor is Co(2+). Zn(2+) serves as cofactor.

The catalysed reaction is sugar phosphate + H2O = sugar + phosphate.. It catalyses the reaction 2-deoxy-D-glucose 6-phosphate + H2O = 2-deoxy-D-glucose + phosphate. It carries out the reaction D-mannitol 1-phosphate + H2O = D-mannitol + phosphate. The enzyme catalyses D-sorbitol 6-phosphate + H2O = D-sorbitol + phosphate. Sugar-phosphate phosphohydrolase that catalyzes the dephosphorylation of D-mannitol 1-phosphate and D-sorbitol 6-phosphate. Also catalyzes the dephosphorylation of 2-deoxyglucose 6-phosphate (2dGlu6P); this is a biologically important activity in vivo since it contributes to the elimination of this toxic compound and plays an important role in the resistance of E.coli to 2-deoxyglucose. The sequence is that of Hexitol phosphatase B from Escherichia coli O157:H7.